The chain runs to 112 residues: Nitrogenase-stabilizing/protective protein NifW (112 aa).

Belongs to the NifW family. As to quaternary structure, homotrimer; associates with NifD.

May protect the nitrogenase Fe-Mo protein from oxidative damage. This Rhodopseudomonas palustris (strain BisA53) protein is Nitrogenase-stabilizing/protective protein NifW.